Consider the following 68-residue polypeptide: MSELNTKTPPAANQASDPEEKGKPGSIKKAEEEEEIDIDLTAPETEKAALAIQGKFRRFQKRKKDSSS.

Over residues 1–16 the composition is skewed to polar residues; the sequence is MSELNTKTPPAANQAS. The disordered stretch occupies residues 1-42; the sequence is MSELNTKTPPAANQASDPEEKGKPGSIKKAEEEEEIDIDLTA. Thr8 carries the phosphothreonine modification. Basic and acidic residues predominate over residues 18–31; that stretch reads PEEKGKPGSIKKAE. An IQ domain is found at 45 to 68; sequence TEKAALAIQGKFRRFQKRKKDSSS.

This sequence belongs to the PCP4 family. In terms of tissue distribution, expressed in laminar and nuclear structures of the CNS.

This is Purkinje cell protein 4-like protein 1 (Pcp4l1) from Mus musculus (Mouse).